The primary structure comprises 144 residues: Large ribosomal subunit protein eL27 (144 aa).

This sequence belongs to the eukaryotic ribosomal protein eL27 family.

It localises to the cytoplasm. The sequence is that of Large ribosomal subunit protein eL27 (RPL27) from Tetrahymena thermophila.